Consider the following 391-residue polypeptide: Phosphatidate cytidylyltransferase 4, chloroplastic (391 aa).

Residues 1–61 (MATFAELVLS…SVSRRFLTAV (61 aa)) constitute a chloroplast transit peptide. The next 6 helical transmembrane spans lie at 102–122 (IFGI…GWVF), 175–195 (FGNI…ALLV), 202–222 (FAQL…PSFW), 254–274 (VGLV…TFAF), 298–318 (IVGL…LSWP), and 321–341 (LFSS…GDLT).

It belongs to the CDS family. Mg(2+) serves as cofactor.

Its subcellular location is the plastid. It is found in the chloroplast membrane. It carries out the reaction a 1,2-diacyl-sn-glycero-3-phosphate + CTP + H(+) = a CDP-1,2-diacyl-sn-glycerol + diphosphate. It participates in phospholipid metabolism; CDP-diacylglycerol biosynthesis; CDP-diacylglycerol from sn-glycerol 3-phosphate: step 3/3. Its activity is regulated as follows. Highest activities is obtained at about 30 mM CTP and 2 mM phosphatidic acid (PA). Its function is as follows. May be involved in the synthesis of minor phospholipids and in modulation of IP3-mediated signal transduction. Promotes the biosynthesis of plastidial phosphatidylglycerol (PG) which is required for structure and function of thylakoid membranes and, hence, for photoautotrophic growth. The sequence is that of Phosphatidate cytidylyltransferase 4, chloroplastic from Arabidopsis thaliana (Mouse-ear cress).